The sequence spans 98 residues: NADH-ubiquinone oxidoreductase chain 4L (98 aa).

The next 3 helical transmembrane spans lie at 1-21 (MTLIHMNIIMAFSMSLVGLLM), 29-49 (ALLCLEGMMLSLFVLAALTIL), and 61-81 (IILLVFAACEAAIGLALLVTI).

The protein belongs to the complex I subunit 4L family. Core subunit of respiratory chain NADH dehydrogenase (Complex I) which is composed of 45 different subunits.

It localises to the mitochondrion inner membrane. It carries out the reaction a ubiquinone + NADH + 5 H(+)(in) = a ubiquinol + NAD(+) + 4 H(+)(out). Core subunit of the mitochondrial membrane respiratory chain NADH dehydrogenase (Complex I) which catalyzes electron transfer from NADH through the respiratory chain, using ubiquinone as an electron acceptor. Part of the enzyme membrane arm which is embedded in the lipid bilayer and involved in proton translocation. This Eubalaena australis (Southern right whale) protein is NADH-ubiquinone oxidoreductase chain 4L (MT-ND4L).